The sequence spans 763 residues: Phosphoglycerol transferase I (763 aa).

4 consecutive transmembrane segments (helical) span residues 1–21 (MSEL…AWKA), 26–46 (WWFA…ITLF), 77–97 (ILPG…LGWI), and 108–128 (FGYS…SPAF).

It belongs to the OpgB family.

It is found in the cell inner membrane. It catalyses the reaction a phosphatidylglycerol + a membrane-derived-oligosaccharide D-glucose = a 1,2-diacyl-sn-glycerol + a membrane-derived-oligosaccharide 6-(glycerophospho)-D-glucose.. Its pathway is glycan metabolism; osmoregulated periplasmic glucan (OPG) biosynthesis. Transfers a phosphoglycerol residue from phosphatidylglycerol to the membrane-bound nascent glucan backbones. The polypeptide is Phosphoglycerol transferase I (Escherichia coli (strain SMS-3-5 / SECEC)).